The primary structure comprises 666 residues: N-acetylgalactosaminyltransferase 6 (666 aa).

Topologically, residues 1-11 are cytoplasmic; it reads MRRPNLKWIVK. The helical; Signal-anchor for type II membrane protein transmembrane segment at 12 to 31 threads the bilayer; that stretch reads ASLLLLISLTLFVLITSWIS. The Lumenal segment spans residues 32 to 666; sequence STPYTNKPVH…NYSQDLVLSL (635 aa). A disordered region spans residues 90 to 126; that stretch reads EPVEEEVDNPHPADDEPQQQPQEELQMAAPADASVKK. Residues 107–120 are compositionally biased toward low complexity; it reads QQQPQEELQMAAPA. Asn181 carries N-linked (GlcNAc...) asparagine glycosylation. Cystine bridges form between Cys192–Cys421, Cys412–Cys491, Cys531–Cys548, Cys577–Cys594, and Cys621–Cys636. Residues 201 to 311 are catalytic subdomain A; it reads LPTVSVIIIF…YNWLPPLLEP (111 aa). Substrate-binding residues include Asp242 and Arg272. Asn285 carries N-linked (GlcNAc...) asparagine glycosylation. Asp295 lines the Mn(2+) pocket. Ser296 is a binding site for substrate. His297 contributes to the Mn(2+) binding site. The interval 367–429 is catalytic subdomain B; that stretch reads PFKSPIMAGG…PCSRIGHIYR (63 aa). Residue Trp398 participates in substrate binding. His426 lines the Mn(2+) pocket. Arg429 is a binding site for substrate. A Ricin B-type lectin domain is found at 518–648; it reads AMGALQNVGN…DNRFQQWNFG (131 aa). Asn651 and Asn657 each carry an N-linked (GlcNAc...) asparagine glycan.

The protein belongs to the glycosyltransferase 2 family. GalNAc-T subfamily. It depends on Mn(2+) as a cofactor. As to expression, expressed during oogenesis, in the somatically derived follicle cells that surround the developing oocyte, which are involved in the maturation of the oocyte and construction of the egg shell, as well as playing a role in subsequent embryonic pattern formation. Expressed in the salivary glands from embryonic stage 12 onwards, becoming stronger at stage 13. During embryonic stages 12-13, also expressed in the posterior midgut and hindgut. During embryonic stages 14-15, expression continues in the hindgut. Expression is detected in the epidermis and antennomaxillary complex during embryonic stages 16-17. In third instar larvae, ubiquitously expressed in wing, eye-antennal, leg and haltere imaginal disks.

Its subcellular location is the golgi apparatus membrane. It catalyses the reaction L-seryl-[protein] + UDP-N-acetyl-alpha-D-galactosamine = a 3-O-[N-acetyl-alpha-D-galactosaminyl]-L-seryl-[protein] + UDP + H(+). The enzyme catalyses L-threonyl-[protein] + UDP-N-acetyl-alpha-D-galactosamine = a 3-O-[N-acetyl-alpha-D-galactosaminyl]-L-threonyl-[protein] + UDP + H(+). The protein operates within protein modification; protein glycosylation. Glycopeptide transferase involved in O-linked oligosaccharide biosynthesis, which catalyzes the transfer of an N-acetyl-D-galactosamine residue to an already glycosylated peptide. In contrast to other proteins of the family, it does not act as a peptide transferase that transfers GalNAc onto serine or threonine residue on the protein receptor, but instead requires the prior addition of a GalNAc on a peptide before adding additional GalNAc moieties. Some peptide transferase activity is however not excluded, considering that its appropriate peptide substrate may remain unidentified. Prefers the diglycosylated Muc5AC-3/13 as substrate. Might have a role in protein O-glycosylation in the Golgi and thereby in establishing and/or maintaining a proper secretory apparatus structure. The chain is N-acetylgalactosaminyltransferase 6 from Drosophila melanogaster (Fruit fly).